Consider the following 365-residue polypeptide: Solute carrier family 35 member G1 (365 aa).

Residues methionine 1–alanine 33 are disordered. The span at alanine 23–alanine 33 shows a compositional bias: low complexity. Helical transmembrane passes span glycine 69–valine 89, alanine 97–isoleucine 117, isoleucine 131–tyrosine 151, leucine 156–isoleucine 176, alanine 187–phenylalanine 207, leucine 222–leucine 242, phenylalanine 252–valine 272, leucine 286–leucine 306, alanine 311–phenylalanine 333, and threonine 338–isoleucine 357. EamA domains follow at residues phenylalanine 80–arginine 202 and valine 233–isoleucine 357.

The protein belongs to the TMEM20 family. In terms of assembly, interacts with STIM1; stimulated by depletion of intracellular calcium. Interacts with ORAI1. Interacts with the plasma membrane calcium-transporting ATPases ATP2B1 and ATP2B4. Interacts with ATP1A1, ATP2A2, KPNB1 and XPO1. As to expression, ubiquitously expressed.

The protein resides in the cell membrane. It is found in the endoplasmic reticulum membrane. Functionally, may play a role in intracellular calcium sensing and homeostasis. May act as a negative regulator of plasma membrane calcium-transporting ATPases preventing calcium efflux from the cell. This Homo sapiens (Human) protein is Solute carrier family 35 member G1 (SLC35G1).